We begin with the raw amino-acid sequence, 445 residues long: UDP-N-acetylmuramate--L-alanine ligase (445 aa).

113–119 (GSHGKTS) provides a ligand contact to ATP.

Belongs to the MurCDEF family.

The protein localises to the cytoplasm. It catalyses the reaction UDP-N-acetyl-alpha-D-muramate + L-alanine + ATP = UDP-N-acetyl-alpha-D-muramoyl-L-alanine + ADP + phosphate + H(+). It participates in cell wall biogenesis; peptidoglycan biosynthesis. Functionally, cell wall formation. The sequence is that of UDP-N-acetylmuramate--L-alanine ligase from Enterococcus faecalis (strain ATCC 700802 / V583).